The following is a 580-amino-acid chain: Myb-like protein C (580 aa).

4 disordered regions span residues 1 to 58 (MTMI…YGSN), 73 to 101 (QYSI…TLLS), 121 to 203 (NVYN…SSTN), and 354 to 380 (SDND…NPPN). 3 stretches are compositionally biased toward low complexity: residues 20-47 (NNNN…NNNN), 87-101 (NSTM…TLLS), and 126-203 (PHQS…SSTN). The span at 361–371 (KKKRERIRKSV) shows a compositional bias: basic residues. HTH myb-type domains lie at 368-430 (RKSV…CPAI) and 431-482 (RKGS…SREV). 2 consecutive DNA-binding regions (H-T-H motif) follow at residues 402-426 (WKKI…KRVL) and 454-478 (WKNV…KSCM). The 63-residue stretch at 484–546 (WSSREDEILQ…ECKTRYFQLN (63 aa)) folds into the Myb-like domain.

The protein resides in the nucleus. Transcription activator required for the culmination, at the time of the fruiting body formation. Regulates genes involved in the cell differentiation within the fruiting body. The protein is Myb-like protein C (mybC) of Dictyostelium discoideum (Social amoeba).